The following is a 193-amino-acid chain: Holliday junction branch migration complex subunit RuvA (193 aa).

The interval 1-64 (MIGRIAGTLI…EDAHLLYGFG (64 aa)) is domain I. The tract at residues 65–143 (TASERNTFRE…AELGHVPGTP (79 aa)) is domain II. The flexible linker stretch occupies residues 144–151 (AVPDSAVD). Positions 151–193 (DVLNALLALGYSEKEAAAAIKQVPAGTGVSDGIKLALKALSKA) are domain III.

Belongs to the RuvA family. Homotetramer. Forms an RuvA(8)-RuvB(12)-Holliday junction (HJ) complex. HJ DNA is sandwiched between 2 RuvA tetramers; dsDNA enters through RuvA and exits via RuvB. An RuvB hexamer assembles on each DNA strand where it exits the tetramer. Each RuvB hexamer is contacted by two RuvA subunits (via domain III) on 2 adjacent RuvB subunits; this complex drives branch migration. In the full resolvosome a probable DNA-RuvA(4)-RuvB(12)-RuvC(2) complex forms which resolves the HJ.

The protein localises to the cytoplasm. Functionally, the RuvA-RuvB-RuvC complex processes Holliday junction (HJ) DNA during genetic recombination and DNA repair, while the RuvA-RuvB complex plays an important role in the rescue of blocked DNA replication forks via replication fork reversal (RFR). RuvA specifically binds to HJ cruciform DNA, conferring on it an open structure. The RuvB hexamer acts as an ATP-dependent pump, pulling dsDNA into and through the RuvAB complex. HJ branch migration allows RuvC to scan DNA until it finds its consensus sequence, where it cleaves and resolves the cruciform DNA. The polypeptide is Holliday junction branch migration complex subunit RuvA (Cupriavidus necator (strain ATCC 17699 / DSM 428 / KCTC 22496 / NCIMB 10442 / H16 / Stanier 337) (Ralstonia eutropha)).